The sequence spans 294 residues: Ribosomal protein L11 methyltransferase (294 aa).

Positions 146, 167, 189, and 231 each coordinate S-adenosyl-L-methionine.

The protein belongs to the methyltransferase superfamily. PrmA family.

The protein resides in the cytoplasm. It catalyses the reaction L-lysyl-[protein] + 3 S-adenosyl-L-methionine = N(6),N(6),N(6)-trimethyl-L-lysyl-[protein] + 3 S-adenosyl-L-homocysteine + 3 H(+). In terms of biological role, methylates ribosomal protein L11. This is Ribosomal protein L11 methyltransferase from Aliivibrio fischeri (strain ATCC 700601 / ES114) (Vibrio fischeri).